We begin with the raw amino-acid sequence, 42 residues long: uncharacterized protein (42 aa).

The chain crosses the membrane as a helical span at residues 15–37 (PLILAVDCAIIIPNTNFIHSFLI).

It is found in the membrane. This is an uncharacterized protein from Dictyostelium discoideum (Social amoeba).